We begin with the raw amino-acid sequence, 258 residues long: Protease HtpX homolog (258 aa).

A run of 2 helical transmembrane segments spans residues 24–44 (VLLF…LGLG) and 45–65 (GPLF…LISP). H146 is a Zn(2+) binding site. E147 is a catalytic residue. H150 lines the Zn(2+) pocket. The next 2 membrane-spanning stretches (helical) occupy residues 157–177 (IVMT…WSTV) and 186–206 (LVGI…LFIS). Position 210 (E210) interacts with Zn(2+).

The protein belongs to the peptidase M48B family. It depends on Zn(2+) as a cofactor.

The protein localises to the cell membrane. In Methanothermobacter thermautotrophicus (strain ATCC 29096 / DSM 1053 / JCM 10044 / NBRC 100330 / Delta H) (Methanobacterium thermoautotrophicum), this protein is Protease HtpX homolog.